The primary structure comprises 363 residues: MVGMTRIQSAEPVWILFVLTLYSSVLMQVKPQLWSVGIERKKLFGETNTSVHCDEIRGLSRNQRSLCRTYNDHMYYVESGSKQGVEECQWQFRGQRWNCSLASNASPDKIIAVGSKETAFTYAITSGGVVQSIARACKSGNLMACGCSKRERPTGLGKDWNWGGCGDDIDYAYGFAHEFIDAQERDNSSPNDRRVKSHKAMNIHNNEAGRLSVVRASHTTCKCHGVSGSCSIKTCWLQTPQFRTIGDKLRQRYDDALEMRVTHRGQMKTRFSSDRNPSNIDLVYIDSSPDYCKVNHKLGILGTSGRECQLDSLAMDGCGLMCCGRGYTTKMVEVVKSCNCKFQWCCFVKCQQCKEKVLKHICN.

The first 27 residues, 1–27, serve as a signal peptide directing secretion; that stretch reads MVGMTRIQSAEPVWILFVLTLYSSVLM. 2 N-linked (GlcNAc...) asparagine glycosylation sites follow: Asn-48 and Asn-98. 11 disulfide bridges follow: Cys-88–Cys-99, Cys-137–Cys-145, Cys-147–Cys-165, Cys-221–Cys-235, Cys-223–Cys-230, Cys-292–Cys-323, Cys-308–Cys-318, Cys-322–Cys-362, Cys-338–Cys-353, Cys-340–Cys-350, and Cys-345–Cys-346. The O-palmitoleoyl serine; by PORCN moiety is linked to residue Ser-227.

The protein belongs to the Wnt family. In terms of processing, palmitoleoylation is required for efficient binding to frizzled receptors. Depalmitoleoylation leads to Wnt signaling pathway inhibition.

Its subcellular location is the secreted. The protein resides in the extracellular space. It localises to the extracellular matrix. In terms of biological role, ligand for members of the frizzled family of seven transmembrane receptors. Probable developmental protein. May be a signaling molecule which affects the development of discrete regions of tissues. Is likely to signal over only few cell diameters. This is Protein Wnt-5 (WNT5) from Halocynthia roretzi (Sea squirt).